A 409-amino-acid chain; its full sequence is Patellin-6 (409 aa).

The region spanning 116 to 294 (EKLTEEDLGF…QYGGLSRPTD (179 aa)) is the CRAL-TRIO domain. The GOLD domain occupies 270–404 (AETLYKFIRP…VAAYRYTVRK (135 aa)).

This sequence belongs to the patellin family.

Its subcellular location is the membrane. The protein resides in the cytoplasm. Carrier protein that may be involved in membrane-trafficking events associated with cell-plate formation during cytokinesis. Binds to some hydrophobic molecules such as phosphoinositides and promotes their transfer between the different cellular sites. This chain is Patellin-6 (PATL6), found in Arabidopsis thaliana (Mouse-ear cress).